The chain runs to 917 residues: Protein translocase subunit SecA 1 (917 aa).

Residues glutamine 87, 105–109 (GEGKT), and aspartate 507 contribute to the ATP site. A disordered region spans residues 866–917 (EKSPESIGEDIEGREHPQKHQPFVRQGEKIGRNDPCPCGSGKKYKQCHGKLN). Cysteine 901, cysteine 903, cysteine 912, and histidine 913 together coordinate Zn(2+). Basic residues predominate over residues 907 to 917 (KKYKQCHGKLN).

This sequence belongs to the SecA family. In terms of assembly, monomer and homodimer. Part of the essential Sec protein translocation apparatus which comprises SecA, SecYEG and auxiliary proteins SecDF-YajC and YidC. The cofactor is Zn(2+).

Its subcellular location is the cell inner membrane. The protein localises to the cytoplasm. It catalyses the reaction ATP + H2O + cellular proteinSide 1 = ADP + phosphate + cellular proteinSide 2.. In terms of biological role, part of the Sec protein translocase complex. Interacts with the SecYEG preprotein conducting channel. Has a central role in coupling the hydrolysis of ATP to the transfer of proteins into and across the cell membrane, serving both as a receptor for the preprotein-SecB complex and as an ATP-driven molecular motor driving the stepwise translocation of polypeptide chains across the membrane. The polypeptide is Protein translocase subunit SecA 1 (Nitrosospira multiformis (strain ATCC 25196 / NCIMB 11849 / C 71)).